An 840-amino-acid polypeptide reads, in one-letter code: Homeobox-leucine zipper protein HOX9 (840 aa).

2 disordered regions span residues 1–26 and 135–160; these read MAAA…AGMD and NPSL…DASN. The span at 12 to 21 shows a compositional bias: gly residues; it reads GSDGGGGGYD. The homeobox DNA-binding region spans 26–89; that stretch reads DSGKYVRYTP…NRRCRDKQRK (64 aa). The stretch at 86–135 forms a coiled coil; that stretch reads KQRKEASRLQAVNRKLTAMNKLLMEENERLQKQVSQLVHENAYMKQQLQN. The START domain maps to 157–385; it reads DASNPSGLLT…IAQETSGEVV (229 aa).

This sequence belongs to the HD-ZIP homeobox family. Class III subfamily. As to expression, expressed in seedlings, roots, stems, leaf sheaths and blades and panicles.

The protein localises to the nucleus. Functionally, probable transcription factor. The protein is Homeobox-leucine zipper protein HOX9 (HOX9) of Oryza sativa subsp. japonica (Rice).